The following is an 844-amino-acid chain: RPA-related protein RADX (844 aa).

Residues 228-331 (WHNRKNFPAL…LISTMEICLN (104 aa)) constitute a DNA-binding region (OB). Disordered stretches follow at residues 571–609 (PASETLQNASPPSTSQAAAKEGHYHERGSKRSQDDRPMD) and 626–664 (GPTANPVPVPQPHSSAQMKGNKPNIPSRENSTANATGKS). Polar residues predominate over residues 572 to 587 (ASETLQNASPPSTSQA). Positions 590-608 (KEGHYHERGSKRSQDDRPM) are enriched in basic and acidic residues. The segment covering 652–662 (SRENSTANATG) has biased composition (polar residues).

Its subcellular location is the chromosome. Its function is as follows. Single-stranded DNA-binding protein recruited to replication forks to maintain genome stability. Prevents fork collapse by antagonizing the accumulation of RAD51 at forks to ensure the proper balance of fork remodeling and protection without interfering with the capacity of cells to complete homologous recombination of double-strand breaks. In Rattus norvegicus (Rat), this protein is RPA-related protein RADX.